The following is a 535-amino-acid chain: Probable cytochrome P450 12b2, mitochondrial (535 aa).

C479 provides a ligand contact to heme.

It belongs to the cytochrome P450 family. Requires heme as cofactor.

The protein resides in the mitochondrion membrane. This Drosophila melanogaster (Fruit fly) protein is Probable cytochrome P450 12b2, mitochondrial (Cyp12b2).